Reading from the N-terminus, the 493-residue chain is Cobyric acid synthase (493 aa).

The region spanning 246–440 is the GATase cobBQ-type domain; it reads PIDIAVIKMP…IHGVFDGVVF (195 aa). The Nucleophile role is filled by Cys326. Residue His432 is part of the active site.

This sequence belongs to the CobB/CobQ family. CobQ subfamily.

It participates in cofactor biosynthesis; adenosylcobalamin biosynthesis. Its function is as follows. Catalyzes amidations at positions B, D, E, and G on adenosylcobyrinic A,C-diamide. NH(2) groups are provided by glutamine, and one molecule of ATP is hydrogenolyzed for each amidation. This chain is Cobyric acid synthase, found in Clostridium botulinum (strain Kyoto / Type A2).